The chain runs to 603 residues: Elongation factor 4 (603 aa).

Positions 7-191 (DNIRNFSIVA…AIVTRLPPPQ (185 aa)) constitute a tr-type G domain. Residues 19 to 24 (DHGKST) and 138 to 141 (NKVD) each bind GTP.

It belongs to the TRAFAC class translation factor GTPase superfamily. Classic translation factor GTPase family. LepA subfamily.

Its subcellular location is the cell inner membrane. It catalyses the reaction GTP + H2O = GDP + phosphate + H(+). In terms of biological role, required for accurate and efficient protein synthesis under certain stress conditions. May act as a fidelity factor of the translation reaction, by catalyzing a one-codon backward translocation of tRNAs on improperly translocated ribosomes. Back-translocation proceeds from a post-translocation (POST) complex to a pre-translocation (PRE) complex, thus giving elongation factor G a second chance to translocate the tRNAs correctly. Binds to ribosomes in a GTP-dependent manner. This is Elongation factor 4 from Rhodopseudomonas palustris (strain HaA2).